A 192-amino-acid polypeptide reads, in one-letter code: Fe/S biogenesis protein NfuA (192 aa).

[4Fe-4S] cluster contacts are provided by Cys149 and Cys152.

It belongs to the NfuA family. In terms of assembly, homodimer. It depends on [4Fe-4S] cluster as a cofactor.

Its function is as follows. Involved in iron-sulfur cluster biogenesis. Binds a 4Fe-4S cluster, can transfer this cluster to apoproteins, and thereby intervenes in the maturation of Fe/S proteins. Could also act as a scaffold/chaperone for damaged Fe/S proteins. The polypeptide is Fe/S biogenesis protein NfuA (Colwellia psychrerythraea (strain 34H / ATCC BAA-681) (Vibrio psychroerythus)).